The sequence spans 109 residues: Small ribosomal subunit protein uS17 (109 aa).

It belongs to the universal ribosomal protein uS17 family. As to quaternary structure, part of the 30S ribosomal subunit.

Functionally, one of the primary rRNA binding proteins, it binds specifically to the 5'-end of 16S ribosomal RNA. This chain is Small ribosomal subunit protein uS17, found in Halobacterium salinarum (strain ATCC 29341 / DSM 671 / R1).